The chain runs to 96 residues: Small cysteine and glycine repeat-containing protein 7 (96 aa).

The 14 X 2 AA repeats of CG stretch occupies residues 4–80; it reads CGCGSCGGCG…TCGSCGCGCG (77 aa).

This sequence belongs to the KRTAP type 28 family.

Its function is as follows. In the hair cortex, hair keratin intermediate filaments are embedded in an interfilamentous matrix, consisting of hair keratin-associated proteins (KRTAP), which are essential for the formation of a rigid and resistant hair shaft through their extensive disulfide bond cross-linking with abundant cysteine residues of hair keratins. The matrix proteins include the high-sulfur and high-glycine-tyrosine keratins. This is Small cysteine and glycine repeat-containing protein 7 from Homo sapiens (Human).